The following is a 382-amino-acid chain: Galactokinase (382 aa).

Residue 34-37 coordinates substrate; sequence EHTD. 124–130 lines the ATP pocket; it reads GAGLSSS. 2 residues coordinate Mg(2+): S130 and E162. D174 serves as the catalytic Proton acceptor. Y223 provides a ligand contact to substrate.

It belongs to the GHMP kinase family. GalK subfamily.

Its subcellular location is the cytoplasm. It carries out the reaction alpha-D-galactose + ATP = alpha-D-galactose 1-phosphate + ADP + H(+). Its pathway is carbohydrate metabolism; galactose metabolism. In terms of biological role, catalyzes the transfer of the gamma-phosphate of ATP to D-galactose to form alpha-D-galactose-1-phosphate (Gal-1-P). The chain is Galactokinase from Salmonella newport (strain SL254).